Consider the following 328-residue polypeptide: tRNA-modifying protein YgfZ (328 aa).

Folate-binding residues include tryptophan 28 and tryptophan 190.

It belongs to the tRNA-modifying YgfZ family.

It localises to the cytoplasm. Functionally, folate-binding protein involved in regulating the level of ATP-DnaA and in the modification of some tRNAs. It is probably a key factor in regulatory networks that act via tRNA modification, such as initiation of chromosomal replication. The protein is tRNA-modifying protein YgfZ of Sodalis glossinidius (strain morsitans).